Consider the following 364-residue polypeptide: L-carnitine dehydrogenase (364 aa).

11-16 (GGGVIG) contacts NAD(+). The interval 336–364 (KPAASTAAEKAKASKPVKKAEKPKKKKKG) is disordered. Positions 348–364 (ASKPVKKAEKPKKKKKG) are enriched in basic residues.

Belongs to the 3-hydroxyacyl-CoA dehydrogenase family. L-carnitine dehydrogenase subfamily. Homodimer.

The protein localises to the cytoplasm. It carries out the reaction carnitine + NAD(+) = 3-dehydrocarnitine + NADH + H(+). The protein operates within amine and polyamine metabolism; carnitine metabolism. Functionally, catalyzes the NAD(+)-dependent oxidation of L-carnitine to 3-dehydrocarnitine. The polypeptide is L-carnitine dehydrogenase (Mesorhizobium japonicum (strain LMG 29417 / CECT 9101 / MAFF 303099) (Mesorhizobium loti (strain MAFF 303099))).